The primary structure comprises 115 residues: T cell receptor beta variable 7-7 (115 aa).

Positions 1–21 (MGTSLLCWVVLGFLGTDHTGA) are cleaved as a signal peptide. The region spanning 22 to 115 (GVSQSPRYKV…SAMYRCASSL (94 aa)) is the Ig-like domain. An intrachain disulfide couples cysteine 42 to cysteine 111.

In terms of assembly, alpha-beta TR is a heterodimer composed of an alpha and beta chain; disulfide-linked. The alpha-beta TR is associated with the transmembrane signaling CD3 coreceptor proteins to form the TR-CD3 (TcR or TCR). The assembly of alpha-beta TR heterodimers with CD3 occurs in the endoplasmic reticulum where a single alpha-beta TR heterodimer associates with one CD3D-CD3E heterodimer, one CD3G-CD3E heterodimer and one CD247 homodimer forming a stable octameric structure. CD3D-CD3E and CD3G-CD3E heterodimers preferentially associate with TR alpha and TR beta chains, respectively. The association of the CD247 homodimer is the last step of TcR assembly in the endoplasmic reticulum and is required for transport to the cell surface.

The protein localises to the cell membrane. Its function is as follows. V region of the variable domain of T cell receptor (TR) beta chain that participates in the antigen recognition. Alpha-beta T cell receptors are antigen specific receptors which are essential to the immune response and are present on the cell surface of T lymphocytes. Recognize peptide-major histocompatibility (MH) (pMH) complexes that are displayed by antigen presenting cells (APC), a prerequisite for efficient T cell adaptive immunity against pathogens. Binding of alpha-beta TR to pMH complex initiates TR-CD3 clustering on the cell surface and intracellular activation of LCK that phosphorylates the ITAM motifs of CD3G, CD3D, CD3E and CD247 enabling the recruitment of ZAP70. In turn ZAP70 phosphorylates LAT, which recruits numerous signaling molecules to form the LAT signalosome. The LAT signalosome propagates signal branching to three major signaling pathways, the calcium, the mitogen-activated protein kinase (MAPK) kinase and the nuclear factor NF-kappa-B (NF-kB) pathways, leading to the mobilization of transcription factors that are critical for gene expression and essential for T cell growth and differentiation. The T cell repertoire is generated in the thymus, by V-(D)-J rearrangement. This repertoire is then shaped by intrathymic selection events to generate a peripheral T cell pool of self-MH restricted, non-autoaggressive T cells. Post-thymic interaction of alpha-beta TR with the pMH complexes shapes TR structural and functional avidity. The polypeptide is T cell receptor beta variable 7-7 (Homo sapiens (Human)).